The following is a 354-amino-acid chain: Probable cinnamyl alcohol dehydrogenase 5 (354 aa).

Zn(2+) is bound at residue C43. S45 serves as a coordination point for NADP(+). Residues H65, E66, C96, C99, C102, C110, and C159 each contribute to the Zn(2+) site. Residues T163, 184-189 (GLGGLG), 207-212 (SSSPGK), T247, G271, and 294-296 (SCI) contribute to the NADP(+) site.

The protein belongs to the zinc-containing alcohol dehydrogenase family. Homodimer. Zn(2+) is required as a cofactor.

It catalyses the reaction (E)-cinnamyl alcohol + NADP(+) = (E)-cinnamaldehyde + NADPH + H(+). The enzyme catalyses (E)-coniferol + NADP(+) = (E)-coniferaldehyde + NADPH + H(+). The catalysed reaction is (E)-sinapyl alcohol + NADP(+) = (E)-sinapaldehyde + NADPH + H(+). It carries out the reaction (E)-4-coumaroyl alcohol + NADP(+) = (E)-4-coumaraldehyde + NADPH + H(+). It catalyses the reaction (E)-caffeyl alcohol + NADP(+) = (E)-caffeyl aldehyde + NADPH + H(+). It participates in aromatic compound metabolism; phenylpropanoid biosynthesis. Its function is as follows. Involved in lignin biosynthesis. Catalyzes the final step specific for the production of lignin monomers. Catalyzes the NADPH-dependent reduction of coniferaldehyde, 5-hydroxyconiferaldehyde, sinapaldehyde, 4-coumaraldehyde and caffeyl aldehyde to their respective alcohols. This Oryza sativa subsp. japonica (Rice) protein is Probable cinnamyl alcohol dehydrogenase 5.